We begin with the raw amino-acid sequence, 404 residues long: Cysteine desulfurase IscS (404 aa).

Pyridoxal 5'-phosphate is bound by residues 75–76, Asn155, Gln183, and 203–205; these read AT and SAH. Lys206 is subject to N6-(pyridoxal phosphate)lysine. A pyridoxal 5'-phosphate-binding site is contributed by Thr243. Cys328 (cysteine persulfide intermediate) is an active-site residue. Cys328 lines the [2Fe-2S] cluster pocket.

The protein belongs to the class-V pyridoxal-phosphate-dependent aminotransferase family. NifS/IscS subfamily. As to quaternary structure, homodimer. Forms a heterotetramer with IscU, interacts with other sulfur acceptors. It depends on pyridoxal 5'-phosphate as a cofactor.

The protein resides in the cytoplasm. The enzyme catalyses (sulfur carrier)-H + L-cysteine = (sulfur carrier)-SH + L-alanine. Its pathway is cofactor biosynthesis; iron-sulfur cluster biosynthesis. Functionally, master enzyme that delivers sulfur to a number of partners involved in Fe-S cluster assembly, tRNA modification or cofactor biosynthesis. Catalyzes the removal of elemental sulfur atoms from cysteine to produce alanine. Functions as a sulfur delivery protein for Fe-S cluster synthesis onto IscU, an Fe-S scaffold assembly protein, as well as other S acceptor proteins. The polypeptide is Cysteine desulfurase IscS (Azotobacter vinelandii (strain DJ / ATCC BAA-1303)).